An 847-amino-acid chain; its full sequence is Alanine--tRNA ligase (847 aa).

Zn(2+) contacts are provided by His-554, His-558, Cys-656, and His-660.

This sequence belongs to the class-II aminoacyl-tRNA synthetase family. Requires Zn(2+) as cofactor.

The protein localises to the cytoplasm. It carries out the reaction tRNA(Ala) + L-alanine + ATP = L-alanyl-tRNA(Ala) + AMP + diphosphate. Catalyzes the attachment of alanine to tRNA(Ala) in a two-step reaction: alanine is first activated by ATP to form Ala-AMP and then transferred to the acceptor end of tRNA(Ala). Also edits incorrectly charged Ser-tRNA(Ala) and Gly-tRNA(Ala) via its editing domain. The sequence is that of Alanine--tRNA ligase from Helicobacter pylori (strain Shi470).